We begin with the raw amino-acid sequence, 426 residues long: MSKSENLYSAARELIPGGVNSPVRAFTGVGGTPLFIEKADGAYLYDVDGKAYIDYVGSWGPMVLGHNHPAIRNAVIEAAERGLSFGAPTEMEVKMAELVTNLVPTMDMVRMVNSGTEATMSAIRLARGFTGRDKIIKFEGCYHGHADCLLVKAGSGALTLGQPNSPGVPADFAKHTLTCTYNDLASVRAAFEQYPQEIACIIVEPVAGNMNCVPPLPEFLPGLRALCDEFGALLIIDEVMTGFRVALAGAQDYYGVVPDLTCLGKIIGGGMPVGAFGGRRDVMDALAPTGPVYQAGTLSGNPIAMAAGFACLNEVAQPGIHETLDELTTRLAEGLLEAAEEANIPLVVNHVGGMFGIFFTDAESVTCYQDVMACDVERFKRFFHLMLEEGVYLAPSAFEAGFMSVAHSMDDINNTIDAARRVFAKL.

K265 carries the post-translational modification N6-(pyridoxal phosphate)lysine.

Belongs to the class-III pyridoxal-phosphate-dependent aminotransferase family. HemL subfamily. Homodimer. Requires pyridoxal 5'-phosphate as cofactor.

The protein resides in the cytoplasm. The enzyme catalyses (S)-4-amino-5-oxopentanoate = 5-aminolevulinate. It participates in porphyrin-containing compound metabolism; protoporphyrin-IX biosynthesis; 5-aminolevulinate from L-glutamyl-tRNA(Glu): step 2/2. The sequence is that of Glutamate-1-semialdehyde 2,1-aminomutase from Salmonella schwarzengrund (strain CVM19633).